The chain runs to 126 residues: MARIAGVDLPREKRVEIALTYIYGIGLTRAKEVLARTGVNPDTRVKNLSETEQSALREAIEKTYKVEGDLRSEVGQNIKRLMDIGAYRGLRHRRGLPVRGQRTKTNARTRKGPRKTVAGKKKATRK.

Residues 92 to 126 (HRRGLPVRGQRTKTNARTRKGPRKTVAGKKKATRK) are disordered.

It belongs to the universal ribosomal protein uS13 family. In terms of assembly, part of the 30S ribosomal subunit. Forms a loose heterodimer with protein S19. Forms two bridges to the 50S subunit in the 70S ribosome.

In terms of biological role, located at the top of the head of the 30S subunit, it contacts several helices of the 16S rRNA. In the 70S ribosome it contacts the 23S rRNA (bridge B1a) and protein L5 of the 50S subunit (bridge B1b), connecting the 2 subunits; these bridges are implicated in subunit movement. Contacts the tRNAs in the A and P-sites. This chain is Small ribosomal subunit protein uS13, found in Deinococcus geothermalis (strain DSM 11300 / CIP 105573 / AG-3a).